We begin with the raw amino-acid sequence, 363 residues long: Proline/serine-rich coiled-coil protein 1 (363 aa).

Phosphoserine is present on Ser22. The stretch at 38-41 (PEKP) is repeat 1. Positions 39-67 (EKPLRRGLSHRSDPNAVAPAPQGVRLSLG) are disordered. At Leu42 the chain carries Phosphoserine. Gly45 is subject to Phosphothreonine. 6 positions are modified to phosphoserine: Ser47, Ser65, Ser70, Ser98, Ser122, and Ser140. The stretch at 68 to 71 (PLSP) is repeat 2. A coiled-coil region spans residues 70 to 94 (SPEKLEEILDEANRLAAQLEQCALQ). The disordered stretch occupies residues 95–363 (DRESAGEGLG…RKVAVPGPTR (269 aa)). The segment at 103–246 (LGPRRVKPSP…HPSPPGPPTP (144 aa)) is 4 X 4 AA repeats of P-X-X-P. Over residues 112 to 124 (PRRETFVLKDSPV) the composition is skewed to basic and acidic residues. A compositionally biased stretch (low complexity) spans 133–148 (SLTRSTPSPSSLTPRL). Thr145 is modified (phosphothreonine). A phosphoserine mark is found at Ser186 and Ser190. The span at 186–196 (SPASSPLTRST) shows a compositional bias: polar residues. Over residues 197–210 (PPVRGRAGPSGRAA) the composition is skewed to low complexity. Ser212 carries the phosphoserine modification. Thr215 bears the Phosphothreonine mark. Repeat copies occupy residues 238-241 (PSPP) and 243-246 (PPTP).

This sequence belongs to the PSRC1 family. Interacts with APC2. Interacts with KIF2A. Interacts with ANKRD53; recruits ANKRD53 to the spindle during mitosis. In terms of processing, phosphorylated during mitosis. In terms of tissue distribution, widely expressed in adult and fetal tissues, with highest expression in the adult brain and fetal thymus. Not detected in adult skeletal muscle.

The protein resides in the cytoplasm. It localises to the cytoskeleton. Its subcellular location is the spindle. The protein localises to the spindle pole. Functionally, required for normal progression through mitosis. Required for normal congress of chromosomes at the metaphase plate, and for normal rate of chromosomal segregation during anaphase. Plays a role in the regulation of mitotic spindle dynamics. Increases the rate of turnover of microtubules on metaphase spindles, and contributes to the generation of normal tension across sister kinetochores. Recruits KIF2A and ANKRD53 to the mitotic spindle and spindle poles. May participate in p53/TP53-regulated growth suppression. The protein is Proline/serine-rich coiled-coil protein 1 (PSRC1) of Homo sapiens (Human).